Reading from the N-terminus, the 260-residue chain is Thiazole synthase (260 aa).

Catalysis depends on Lys-101, which acts as the Schiff-base intermediate with DXP. Residues Gly-162, 188–189 (AG), and 210–211 (NT) each bind 1-deoxy-D-xylulose 5-phosphate.

This sequence belongs to the ThiG family. Homotetramer. Forms heterodimers with either ThiH or ThiS.

Its subcellular location is the cytoplasm. The enzyme catalyses [ThiS sulfur-carrier protein]-C-terminal-Gly-aminoethanethioate + 2-iminoacetate + 1-deoxy-D-xylulose 5-phosphate = [ThiS sulfur-carrier protein]-C-terminal Gly-Gly + 2-[(2R,5Z)-2-carboxy-4-methylthiazol-5(2H)-ylidene]ethyl phosphate + 2 H2O + H(+). It participates in cofactor biosynthesis; thiamine diphosphate biosynthesis. Catalyzes the rearrangement of 1-deoxy-D-xylulose 5-phosphate (DXP) to produce the thiazole phosphate moiety of thiamine. Sulfur is provided by the thiocarboxylate moiety of the carrier protein ThiS. In vitro, sulfur can be provided by H(2)S. This chain is Thiazole synthase, found in Acidithiobacillus ferrooxidans (strain ATCC 23270 / DSM 14882 / CIP 104768 / NCIMB 8455) (Ferrobacillus ferrooxidans (strain ATCC 23270)).